The sequence spans 350 residues: Protein-glutamate methylesterase/protein-glutamine glutaminase (350 aa).

In terms of domain architecture, Response regulatory spans 5–122 (TVLCVDDSAL…REGMLAYSEL (118 aa)). D56 carries the 4-aspartylphosphate modification. In terms of domain architecture, CheB-type methylesterase spans 153–345 (LLSSEKLIAV…KRMLAKISSG (193 aa)). Catalysis depends on residues S165, H191, and D287.

This sequence belongs to the CheB family. Phosphorylated by CheA. Phosphorylation of the N-terminal regulatory domain activates the methylesterase activity.

The protein localises to the cytoplasm. The enzyme catalyses [protein]-L-glutamate 5-O-methyl ester + H2O = L-glutamyl-[protein] + methanol + H(+). The catalysed reaction is L-glutaminyl-[protein] + H2O = L-glutamyl-[protein] + NH4(+). Functionally, involved in chemotaxis. Part of a chemotaxis signal transduction system that modulates chemotaxis in response to various stimuli. Catalyzes the demethylation of specific methylglutamate residues introduced into the chemoreceptors (methyl-accepting chemotaxis proteins or MCP) by CheR. Also mediates the irreversible deamidation of specific glutamine residues to glutamic acid. The chain is Protein-glutamate methylesterase/protein-glutamine glutaminase from Photorhabdus laumondii subsp. laumondii (strain DSM 15139 / CIP 105565 / TT01) (Photorhabdus luminescens subsp. laumondii).